Reading from the N-terminus, the 334-residue chain is Putative ankyrin repeat protein RBE_0347 (334 aa).

ANK repeat units follow at residues 80-90 (EQGINPNIQDS), 91-120 (SGNT…NPNI), 124-161 (SDNT…LKDF), and 162-191 (VGFT…DINV).

This chain is Putative ankyrin repeat protein RBE_0347, found in Rickettsia bellii (strain RML369-C).